Here is a 413-residue protein sequence, read N- to C-terminus: uncharacterized protein (413 aa).

A helical transmembrane segment spans residues 14–34; that stretch reads LLFFTVVIIPIFYYIYKIVYL. N-linked (GlcNAc...) asparagine; by host glycosylation is found at Asn46, Asn55, Asn103, Asn171, Asn179, Asn184, Asn220, Asn252, Asn260, Asn273, Asn362, Asn366, Asn374, Asn378, Asn393, and Asn408. Residues 250–263 show a composition bias toward low complexity; that stretch reads TKNSTETNSDNNSE. The segment at 250 to 277 is disordered; sequence TKNSTETNSDNNSEIVSETNSETNYSTP. The span at 264-277 shows a compositional bias: polar residues; it reads IVSETNSETNYSTP.

It is found in the membrane. This is an uncharacterized protein from Acanthamoeba polyphaga (Amoeba).